The chain runs to 119 residues: Immunoglobulin heavy variable 3-73 (119 aa).

An N-terminal signal peptide occupies residues Met-1 to Cys-19. Residues Glu-20 to Ser-44 form a framework-1 region. In terms of domain architecture, Ig-like spans Glu-20–Arg-119. A disulfide bridge links Cys-41 with Cys-117. Positions Gly-45 to Ala-52 are complementarity-determining-1. Positions Met-53 to Arg-69 are framework-2. The interval Ile-70–Thr-79 is complementarity-determining-2. Residues Ala-80–Cys-117 are framework-3. Residues Thr-118 to Arg-119 are complementarity-determining-3.

Immunoglobulins are composed of two identical heavy chains and two identical light chains; disulfide-linked.

The protein resides in the secreted. The protein localises to the cell membrane. Functionally, v region of the variable domain of immunoglobulin heavy chains that participates in the antigen recognition. Immunoglobulins, also known as antibodies, are membrane-bound or secreted glycoproteins produced by B lymphocytes. In the recognition phase of humoral immunity, the membrane-bound immunoglobulins serve as receptors which, upon binding of a specific antigen, trigger the clonal expansion and differentiation of B lymphocytes into immunoglobulins-secreting plasma cells. Secreted immunoglobulins mediate the effector phase of humoral immunity, which results in the elimination of bound antigens. The antigen binding site is formed by the variable domain of one heavy chain, together with that of its associated light chain. Thus, each immunoglobulin has two antigen binding sites with remarkable affinity for a particular antigen. The variable domains are assembled by a process called V-(D)-J rearrangement and can then be subjected to somatic hypermutations which, after exposure to antigen and selection, allow affinity maturation for a particular antigen. The sequence is that of Immunoglobulin heavy variable 3-73 from Homo sapiens (Human).